The primary structure comprises 182 residues: Adenine phosphoribosyltransferase (182 aa).

The protein belongs to the purine/pyrimidine phosphoribosyltransferase family. Homodimer.

The protein localises to the cytoplasm. The catalysed reaction is AMP + diphosphate = 5-phospho-alpha-D-ribose 1-diphosphate + adenine. It functions in the pathway purine metabolism; AMP biosynthesis via salvage pathway; AMP from adenine: step 1/1. Its function is as follows. Catalyzes a salvage reaction resulting in the formation of AMP, that is energically less costly than de novo synthesis. The protein is Adenine phosphoribosyltransferase of Streptomyces coelicolor (strain ATCC BAA-471 / A3(2) / M145).